The sequence spans 1228 residues: Structural maintenance of chromosomes protein 1 (1228 aa).

32 to 39 serves as a coordination point for ATP; it reads GPNGAGKS. Residues 197–510 are a coiled coil; it reads NKKRGINAEL…ESKQDAKKRE (314 aa). An SMC hinge domain is found at 522–635; that stretch reads VKGRIIDLCT…CDSMTVARDL (114 aa). Coiled coils occupy residues 710 to 783, 814 to 926, and 984 to 1068; these read KLHS…KIFS, EFTK…EIDR, and VEVD…KRLQ.

This sequence belongs to the SMC family. SMC1 subfamily. As to quaternary structure, cohesin complexes are composed of the psm1/smc1 and psm3/smc3 heterodimer attached via their SMC hinge domain, rad21/scc1 which link them, and psc3/scc3, which interacts with rad21.

The protein resides in the nucleus. It is found in the chromosome. Functionally, involved in chromosome cohesion during cell cycle and in DNA repair. Central component of cohesin complex. The cohesin complex is required for the cohesion of sister chromatids after DNA replication. The cohesin complex apparently forms a large proteinaceous ring within which sister chromatids can be trapped. At anaphase, the complex is cleaved and dissociates from chromatin, allowing sister chromatids to segregate. The sequence is that of Structural maintenance of chromosomes protein 1 (psm1) from Schizosaccharomyces pombe (strain 972 / ATCC 24843) (Fission yeast).